Here is a 218-residue protein sequence, read N- to C-terminus: Phosphoenolpyruvate guanylyltransferase (218 aa).

The phosphoenolpyruvate site is built by T151, G166, and S169.

Belongs to the CofC family.

The catalysed reaction is phosphoenolpyruvate + GTP + H(+) = enolpyruvoyl-2-diphospho-5'-guanosine + diphosphate. Its pathway is cofactor biosynthesis; coenzyme F420 biosynthesis. Guanylyltransferase that catalyzes the activation of phosphoenolpyruvate (PEP) as enolpyruvoyl-2-diphospho-5'-guanosine, via the condensation of PEP with GTP. It is involved in the biosynthesis of coenzyme F420, a hydride carrier cofactor. The chain is Phosphoenolpyruvate guanylyltransferase from Mycobacterium sp. (strain KMS).